Reading from the N-terminus, the 69-residue chain is MAKIKGQVKWFNESKGFGFITPSDGSKDVFVHFSSIQGNGFKTLTEGQNVEFEIQDGQKGPAAVNVFSL.

In terms of domain architecture, CSD spans 6-66 (GQVKWFNESK…GQKGPAAVNV (61 aa)).

It localises to the cytoplasm. The protein is Cold shock-like protein CspC (cspC) of Buchnera aphidicola subsp. Acyrthosiphon pisum (strain APS) (Acyrthosiphon pisum symbiotic bacterium).